Here is a 296-residue protein sequence, read N- to C-terminus: Class E basic helix-loop-helix protein 22 (296 aa).

Positions 26–70 (SAFRPPQGLDLSQPGDRSPLHCYDGPDPSDLLRHHQHHHQASSGA) are disordered. The region spanning 153-207 (TLRLNINARERRRMHDLNDALDELRAVIPYAHSPSVRKLSKIATLLLAKNYILMQ) is the bHLH domain.

It localises to the nucleus. Functionally, may act as a transcriptional repressor. The polypeptide is Class E basic helix-loop-helix protein 22 (bhlhe22) (Xenopus tropicalis (Western clawed frog)).